The primary structure comprises 273 residues: Phosphatidylglycerol--prolipoprotein diacylglyceryl transferase (273 aa).

7 helical membrane passes run 21–41, 60–80, 95–115, 124–144, 176–196, 203–223, and 236–256; these read ISVR…LWLA, LLFA…VLFY, VWTG…AMLW, FFGV…MGRM, SQLY…NWFI, GSVS…VEYV, and FISM…LMMV. Arg143 serves as a coordination point for a 1,2-diacyl-sn-glycero-3-phospho-(1'-sn-glycerol).

It belongs to the Lgt family.

It is found in the cell inner membrane. The enzyme catalyses L-cysteinyl-[prolipoprotein] + a 1,2-diacyl-sn-glycero-3-phospho-(1'-sn-glycerol) = an S-1,2-diacyl-sn-glyceryl-L-cysteinyl-[prolipoprotein] + sn-glycerol 1-phosphate + H(+). The protein operates within protein modification; lipoprotein biosynthesis (diacylglyceryl transfer). Its function is as follows. Catalyzes the transfer of the diacylglyceryl group from phosphatidylglycerol to the sulfhydryl group of the N-terminal cysteine of a prolipoprotein, the first step in the formation of mature lipoproteins. The sequence is that of Phosphatidylglycerol--prolipoprotein diacylglyceryl transferase from Vibrio atlanticus (strain LGP32) (Vibrio splendidus (strain Mel32)).